We begin with the raw amino-acid sequence, 98 residues long: MALTKAEMAENLFEKLGVSKRDAKDLVEAFFEEVRRSLENGEQVKLSGFGNFDLRDKNQRPGRNPKTGEDIPITARRVVTFRPGQKLKSRVENATPKE.

Residues 50-71 (GNFDLRDKNQRPGRNPKTGEDI) form a disordered region.

It belongs to the bacterial histone-like protein family. In terms of assembly, heterodimer of an alpha and a beta chain.

Its function is as follows. This protein is one of the two subunits of integration host factor, a specific DNA-binding protein that functions in genetic recombination as well as in transcriptional and translational control. The protein is Integration host factor subunit alpha of Proteus mirabilis (strain HI4320).